A 211-amino-acid polypeptide reads, in one-letter code: ATP phosphoribosyltransferase (211 aa).

Belongs to the ATP phosphoribosyltransferase family. Short subfamily. As to quaternary structure, heteromultimer composed of HisG and HisZ subunits.

It localises to the cytoplasm. The enzyme catalyses 1-(5-phospho-beta-D-ribosyl)-ATP + diphosphate = 5-phospho-alpha-D-ribose 1-diphosphate + ATP. It participates in amino-acid biosynthesis; L-histidine biosynthesis; L-histidine from 5-phospho-alpha-D-ribose 1-diphosphate: step 1/9. Functionally, catalyzes the condensation of ATP and 5-phosphoribose 1-diphosphate to form N'-(5'-phosphoribosyl)-ATP (PR-ATP). Has a crucial role in the pathway because the rate of histidine biosynthesis seems to be controlled primarily by regulation of HisG enzymatic activity. This Pseudomonas putida (strain ATCC 47054 / DSM 6125 / CFBP 8728 / NCIMB 11950 / KT2440) protein is ATP phosphoribosyltransferase.